Reading from the N-terminus, the 407-residue chain is Argininosuccinate synthase (407 aa).

ATP-binding positions include 16 to 24 (AYSGGLDTS) and Ala44. Residues Tyr96 and Ser101 each contribute to the L-citrulline site. Position 126 (Gly126) interacts with ATP. Residues Thr128, Asn132, and Asp133 each coordinate L-aspartate. Residue Asn132 participates in L-citrulline binding. Residues Arg136, Ser185, Ser194, Glu270, and Tyr282 each contribute to the L-citrulline site.

It belongs to the argininosuccinate synthase family. Type 1 subfamily. Homotetramer.

It localises to the cytoplasm. It catalyses the reaction L-citrulline + L-aspartate + ATP = 2-(N(omega)-L-arginino)succinate + AMP + diphosphate + H(+). It participates in amino-acid biosynthesis; L-arginine biosynthesis; L-arginine from L-ornithine and carbamoyl phosphate: step 2/3. The sequence is that of Argininosuccinate synthase from Shewanella denitrificans (strain OS217 / ATCC BAA-1090 / DSM 15013).